Here is a 588-residue protein sequence, read N- to C-terminus: Zeta-carotene desaturase, chloroplastic/chromoplastic (588 aa).

A chloroplast and chromoplast-targeting transit peptide spans 1 to 49; it reads MATCSAYLCCPATSASLKKRVFPDGSAGFLFFGGRRLSNRLVTPKSVIR.

It belongs to the zeta carotene desaturase family. Monomer and dimer. Decylplastoquinone is required as a cofactor. It depends on 6-decylubiquinone as a cofactor.

It localises to the plastid. The protein localises to the chloroplast. Its subcellular location is the chromoplast. It carries out the reaction 9,9'-di-cis-zeta-carotene + 2 a quinone = 7,7',9,9'-tetra-cis-lycopene + 2 a quinol. The protein operates within carotenoid biosynthesis; lycopene biosynthesis. In terms of biological role, catalyzes the conversion of zeta-carotene to lycopene via the intermediary of neurosporene. It carries out two consecutive desaturations (introduction of double bonds) at positions C-7 and C-7'. Shows stereoselectivity toward trans C15-C15'zeta-carotene double bond. The zeta-carotene produced by the phytoene desaturase PDS has a C15-C15' double bond in the cis configuration and it requires isomerization before being recognized as substrate by ZDS. No activity with all-trans-zeta-carotene. The main product is 7,9,7',9'-tetra-cis-lycopene (pro-lycopene). This chain is Zeta-carotene desaturase, chloroplastic/chromoplastic (ZDS), found in Capsicum annuum (Capsicum pepper).